Reading from the N-terminus, the 123-residue chain is MPTIQQLVRKGRHSKKAKVATAGLKGSPQRRGVCTRVYTTTPKKPNSALRKVARVRLTSGIEVSAYIPGEGHNLQEHSMVLVRGGRVKDLPGVRYKIIRGALDTQGVKDRKQARSRYGAKKGQ.

The segment at 1-31 is disordered; it reads MPTIQQLVRKGRHSKKAKVATAGLKGSPQRR. Residues 9 to 18 show a composition bias toward basic residues; the sequence is RKGRHSKKAK. Residue D89 is modified to 3-methylthioaspartic acid.

The protein belongs to the universal ribosomal protein uS12 family. As to quaternary structure, part of the 30S ribosomal subunit. Contacts proteins S8 and S17. May interact with IF1 in the 30S initiation complex.

Its function is as follows. With S4 and S5 plays an important role in translational accuracy. Interacts with and stabilizes bases of the 16S rRNA that are involved in tRNA selection in the A site and with the mRNA backbone. Located at the interface of the 30S and 50S subunits, it traverses the body of the 30S subunit contacting proteins on the other side and probably holding the rRNA structure together. The combined cluster of proteins S8, S12 and S17 appears to hold together the shoulder and platform of the 30S subunit. This is Small ribosomal subunit protein uS12 from Corynebacterium aurimucosum (strain ATCC 700975 / DSM 44827 / CIP 107346 / CN-1) (Corynebacterium nigricans).